The chain runs to 93 residues: Class I hydrophobin SSP1 (93 aa).

Positions 1–26 (MKYITAISMLATAALTAATPLNGVEA) are cleaved as a signal peptide. Cystine bridges form between C39–C71, C47–C65, C48–C56, and C72–C89.

This sequence belongs to the fungal hydrophobin family. As to quaternary structure, self-assembles to form functional amyloid fibrils called rodlets. Self-assembly into fibrillar rodlets occurs spontaneously at hydrophobic:hydrophilic interfaces and the rodlets further associate laterally to form amphipathic monolayers.

Its subcellular location is the secreted. It is found in the cell wall. Functionally, aerial growth, conidiation, and dispersal of filamentous fungi in the environment rely upon a capability of their secreting small amphipathic proteins called hydrophobins (HPBs) with low sequence identity. Class I can self-assemble into an outermost layer of rodlet bundles on aerial cell surfaces, conferring cellular hydrophobicity that supports fungal growth, development and dispersal; whereas Class II form highly ordered films at water-air interfaces through intermolecular interactions but contribute nothing to the rodlet structure. SSP1 is a class I hydrophobin that acts as an effector in the ericoid mycorrhizal interaction with Vaccinium myrtillus. May enhance attachment of the fungus to the root surface and protect the fungal hypha from plant defense compounds. In Oidiodendron maius (strain Zn), this protein is Class I hydrophobin SSP1.